The sequence spans 1210 residues: ATPase family AAA domain-containing protein At1g05910 (1210 aa).

The span at Met1 to Gly11 shows a compositional bias: polar residues. Disordered stretches follow at residues Met1–Arg32 and Leu63–Asp291. The span at Asp97–Met109 shows a compositional bias: acidic residues. The segment covering Ser130 to Arg146 has biased composition (basic and acidic residues). A compositionally biased stretch (acidic residues) spans Asp167–Gln226. A compositionally biased stretch (basic and acidic residues) spans Glu227–Pro244. The segment covering Gly276–Phe286 has biased composition (basic residues). Residue Gly422 to Thr429 coordinates ATP. The segment at Leu856–Glu883 is disordered. The region spanning Arg897 to Met1000 is the Bromo domain. Residues Asp1057–Thr1070 show a composition bias toward basic and acidic residues. The disordered stretch occupies residues Asp1057 to Lys1151. A compositionally biased stretch (polar residues) spans Asp1080–Glu1090. 2 stretches are compositionally biased toward basic and acidic residues: residues Asp1108–Ser1123 and Lys1138–Lys1151.

This sequence belongs to the AAA ATPase family.

The sequence is that of ATPase family AAA domain-containing protein At1g05910 from Arabidopsis thaliana (Mouse-ear cress).